We begin with the raw amino-acid sequence, 71 residues long: Sodium channel neurotoxin MeuNaTxalpha-12 (71 aa).

An N-terminal signal peptide occupies residues 1 to 6; sequence MTGVES. The region spanning 8-70 is the LCN-type CS-alpha/beta domain; that stretch reads RDAYIAQGNN…VPIRIQGKCQ (63 aa). 4 disulfide bridges follow: C18–C69, C22–C42, C28–C52, and C32–C54. R71 is a propeptide (removed by a carboxypeptidase).

The protein belongs to the long (4 C-C) scorpion toxin superfamily. Sodium channel inhibitor family. Alpha subfamily. As to expression, expressed by the venom gland.

The protein localises to the secreted. Its function is as follows. Alpha toxins bind voltage-independently at site-3 of sodium channels (Nav) and inhibit the inactivation of the activated channels, thereby blocking neuronal transmission. The chain is Sodium channel neurotoxin MeuNaTxalpha-12 from Mesobuthus eupeus (Lesser Asian scorpion).